The following is a 432-amino-acid chain: 3-phosphoshikimate 1-carboxyvinyltransferase (432 aa).

3-phosphoshikimate contacts are provided by lysine 22, serine 23, and arginine 27. Lysine 22 serves as a coordination point for phosphoenolpyruvate. Phosphoenolpyruvate is bound by residues glycine 96 and arginine 127. Positions 173, 174, 175, 201, 316, 339, and 343 each coordinate 3-phosphoshikimate. Glutamine 175 contributes to the phosphoenolpyruvate binding site. Aspartate 316 (proton acceptor) is an active-site residue. Residues arginine 347, arginine 391, and lysine 416 each coordinate phosphoenolpyruvate.

The protein belongs to the EPSP synthase family. Monomer.

It localises to the cytoplasm. It catalyses the reaction 3-phosphoshikimate + phosphoenolpyruvate = 5-O-(1-carboxyvinyl)-3-phosphoshikimate + phosphate. Its pathway is metabolic intermediate biosynthesis; chorismate biosynthesis; chorismate from D-erythrose 4-phosphate and phosphoenolpyruvate: step 6/7. In terms of biological role, catalyzes the transfer of the enolpyruvyl moiety of phosphoenolpyruvate (PEP) to the 5-hydroxyl of shikimate-3-phosphate (S3P) to produce enolpyruvyl shikimate-3-phosphate and inorganic phosphate. The sequence is that of 3-phosphoshikimate 1-carboxyvinyltransferase from Haemophilus influenzae (strain ATCC 51907 / DSM 11121 / KW20 / Rd).